The primary structure comprises 64 residues: Large ribosomal subunit protein bL35 (64 aa).

This sequence belongs to the bacterial ribosomal protein bL35 family.

The polypeptide is Large ribosomal subunit protein bL35 (Desulforamulus reducens (strain ATCC BAA-1160 / DSM 100696 / MI-1) (Desulfotomaculum reducens)).